Reading from the N-terminus, the 363-residue chain is Peptide chain release factor 2 (363 aa).

Q251 carries the post-translational modification N5-methylglutamine.

The protein belongs to the prokaryotic/mitochondrial release factor family. In terms of processing, methylated by PrmC. Methylation increases the termination efficiency of RF2.

The protein resides in the cytoplasm. Its function is as follows. Peptide chain release factor 2 directs the termination of translation in response to the peptide chain termination codons UGA and UAA. The sequence is that of Peptide chain release factor 2 from Helicobacter pylori (strain G27).